Here is a 580-residue protein sequence, read N- to C-terminus: Acyl-coenzyme A synthetase ACSM3, mitochondrial (580 aa).

The transit peptide at 1–21 (MVMLLRARCFQRLAIPDPMRV) directs the protein to the mitochondrion. N6-succinyllysine occurs at positions 67 and 100. An N6-acetyllysine modification is found at Lys151. Residues 229 to 237 (TSGTTGPPK), 368 to 373 (EGYGQT), Asp455, Arg470, and Lys566 contribute to the ATP site.

The protein belongs to the ATP-dependent AMP-binding enzyme family. Mg(2+) is required as a cofactor. Requires Mn(2+) as cofactor. As to expression, detected in kidney (at protein level). Detected in kidney proximal tubules and in liver. Detected at low levels in testis, stomach, heart and lung.

The protein localises to the mitochondrion. Its subcellular location is the mitochondrion matrix. The catalysed reaction is a medium-chain fatty acid + ATP + CoA = a medium-chain fatty acyl-CoA + AMP + diphosphate. It carries out the reaction propanoate + ATP + CoA = propanoyl-CoA + AMP + diphosphate. It catalyses the reaction butanoate + ATP + CoA = butanoyl-CoA + AMP + diphosphate. The enzyme catalyses 2-methylpropanoate + ATP + CoA = 2-methylpropanoyl-CoA + AMP + diphosphate. The catalysed reaction is 2-methylbutanoate + ATP + CoA = 2-methylbutanoyl-CoA + AMP + diphosphate. It carries out the reaction octanoate + ATP + CoA = octanoyl-CoA + AMP + diphosphate. Functionally, catalyzes the activation of fatty acids by CoA to produce an acyl-CoA, the first step in fatty acid metabolism. Capable of activating medium-chain fatty acids with a preference for isobutyrate among fatty acids with 2-6 carbon atoms. This chain is Acyl-coenzyme A synthetase ACSM3, mitochondrial (Acsm3), found in Mus musculus (Mouse).